The sequence spans 110 residues: Protein RnfH (110 aa).

Residues 90 to 110 (VDKTRREGSIEGRKWLPKDSR) form a disordered region.

This sequence belongs to the UPF0125 (RnfH) family.

The protein is Protein RnfH of Burkholderia mallei (strain NCTC 10229).